Here is a 137-residue protein sequence, read N- to C-terminus: Large ribosomal subunit protein uL13 (137 aa).

The protein belongs to the universal ribosomal protein uL13 family. As to quaternary structure, part of the 50S ribosomal subunit.

Functionally, this protein is one of the early assembly proteins of the 50S ribosomal subunit, although it is not seen to bind rRNA by itself. It is important during the early stages of 50S assembly. The polypeptide is Large ribosomal subunit protein uL13 (Methanocaldococcus jannaschii (strain ATCC 43067 / DSM 2661 / JAL-1 / JCM 10045 / NBRC 100440) (Methanococcus jannaschii)).